A 325-amino-acid chain; its full sequence is Glutarate 2-hydroxylase (325 aa).

Fe cation-binding residues include His160, Asp162, and His292.

Belongs to the glutarate hydroxylase family. In terms of assembly, homotetramer. Requires Fe(2+) as cofactor.

The catalysed reaction is glutarate + 2-oxoglutarate + O2 = (S)-2-hydroxyglutarate + succinate + CO2. It functions in the pathway amino-acid degradation. Acts as an alpha-ketoglutarate-dependent dioxygenase catalyzing hydroxylation of glutarate (GA) to L-2-hydroxyglutarate (L2HG). Functions in a L-lysine degradation pathway that proceeds via cadaverine, glutarate and L-2-hydroxyglutarate. The chain is Glutarate 2-hydroxylase from Escherichia coli O6:H1 (strain CFT073 / ATCC 700928 / UPEC).